Here is a 164-residue protein sequence, read N- to C-terminus: Diphosphoinositol polyphosphate phosphohydrolase 3-alpha (164 aa).

Substrate is bound by residues arginine 9, 17 to 19 (KKR), and 38 to 40 (SSR). The 128-residue stretch at 17 to 144 (KKRAACLCFR…VHAEYLEKLK (128 aa)) folds into the Nudix hydrolase domain. 2 residues coordinate Mg(2+): glycine 49 and glutamate 65. Positions 50–71 (GGMEPEEEPDGAAVREVYEEAG) match the Nudix box motif. Catalysis depends on glutamate 68, which acts as the Proton acceptor. Glutamate 69 is a Mg(2+) binding site. Residues 89–91 (RKH), arginine 115, and lysine 133 contribute to the substrate site. The interval 144–164 (KLGGSPTNGNSAAPSPPESEP) is disordered.

The protein belongs to the Nudix hydrolase family. DIPP subfamily. It depends on Mg(2+) as a cofactor. Mn(2+) serves as cofactor. Mainly expressed in testis, liver kidney and, at lower level, in heart, brain, spleen, lung and skeletal muscle.

Its subcellular location is the cytoplasm. It catalyses the reaction diphospho-myo-inositol polyphosphate + H2O = myo-inositol polyphosphate + phosphate.. The catalysed reaction is P(1),P(6)-bis(5'-adenosyl) hexaphosphate + H2O = adenosine 5'-pentaphosphate + AMP + 2 H(+). It carries out the reaction P(1),P(5)-bis(5'-adenosyl) pentaphosphate + H2O = adenosine 5'-tetraphosphate + AMP + 2 H(+). In terms of biological role, cleaves a beta-phosphate from the diphosphate groups in PP-InsP5 (diphosphoinositol pentakisphosphate), suggesting that it may play a role in signal transduction. Also able to catalyze the hydrolysis of dinucleoside oligophosphates, with Ap6A and Ap5A being the preferred substrates. The major reaction products are ADP and p4a from Ap6A and ADP and ATP from Ap5A. Also able to hydrolyze 5-phosphoribose 1-diphosphate; however, the relevance of such activity in vivo remains unclear. This chain is Diphosphoinositol polyphosphate phosphohydrolase 3-alpha, found in Mus musculus (Mouse).